A 347-amino-acid chain; its full sequence is Putative ORC1-type DNA replication protein 1 (347 aa).

ATP is bound by residues 34–38 (TGKTV), Tyr-167, and Arg-179.

The protein belongs to the CDC6/cdc18 family.

Functionally, involved in regulation of DNA replication. Has no effect on MCM helicase activity, either stimulatory or inhibitory. Does not bind DNA. The polypeptide is Putative ORC1-type DNA replication protein 1 (cdc6-1) (Thermoplasma acidophilum (strain ATCC 25905 / DSM 1728 / JCM 9062 / NBRC 15155 / AMRC-C165)).